The sequence spans 426 residues: MSKIIDITGREILDSRGNPTVEADVVLEGGVRGRAAVPSGASTGTREAVELRDEDSSRYGGQGVLKAVGHINGDIRQRLVGQEAEAQESIDQAMLDLDGTSSKRRLGANAILAVSLAVARAAALAAEKPLYRYLSADERFQMPVPMMNIINGGAHADNNVDLQEFMIVPVGAGSIAEAVRYGAEVFHALKKVLRGRGLGTGVGDEGGFAPDLSSNVAAIEAILEAITQAGFEPGRDISLALDTASSEFYQDGRYVLASEGKTLDKEEFTGVLASWVEQYPILSVEDGMAEDDWEGWALLTQRLGQRVQLVGDDLFVTNTAILKEGINRGIANSILIKVNQIGTLTETLAAIRMAHEAGYTAVISHRSGETEDTTIADLAVATQSGQIKTGSLSRTDRVAKYNQLLRIEAELGDKAHYPGRQAFTHP.

Q163 lines the (2R)-2-phosphoglycerate pocket. E205 acts as the Proton donor in catalysis. Mg(2+)-binding residues include D242, E285, and D312. Residues K337, R366, S367, and K388 each contribute to the (2R)-2-phosphoglycerate site. Residue K337 is the Proton acceptor of the active site.

It belongs to the enolase family. As to quaternary structure, component of the RNA degradosome, a multiprotein complex involved in RNA processing and mRNA degradation. Requires Mg(2+) as cofactor.

It localises to the cytoplasm. Its subcellular location is the secreted. The protein localises to the cell surface. The enzyme catalyses (2R)-2-phosphoglycerate = phosphoenolpyruvate + H2O. Its pathway is carbohydrate degradation; glycolysis; pyruvate from D-glyceraldehyde 3-phosphate: step 4/5. In terms of biological role, catalyzes the reversible conversion of 2-phosphoglycerate (2-PG) into phosphoenolpyruvate (PEP). It is essential for the degradation of carbohydrates via glycolysis. This is Enolase from Nitrosococcus oceani (strain ATCC 19707 / BCRC 17464 / JCM 30415 / NCIMB 11848 / C-107).